A 213-amino-acid polypeptide reads, in one-letter code: Ribonuclease HII (213 aa).

The region spanning 27–213 (HAVAGVDEAG…FRGVKEHVAP (187 aa)) is the RNase H type-2 domain. A divalent metal cation contacts are provided by Asp33, Glu34, and Asp125.

Belongs to the RNase HII family. Mn(2+) is required as a cofactor. Requires Mg(2+) as cofactor.

It localises to the cytoplasm. It catalyses the reaction Endonucleolytic cleavage to 5'-phosphomonoester.. In terms of biological role, endonuclease that specifically degrades the RNA of RNA-DNA hybrids. The chain is Ribonuclease HII from Geobacter metallireducens (strain ATCC 53774 / DSM 7210 / GS-15).